The following is a 682-amino-acid chain: Probable xyloglucan glycosyltransferase 6 (682 aa).

The next 2 membrane-spanning stretches (helical) occupy residues 109–129 (LIKG…AAYF) and 173–193 (IVLF…CFWI). Asp-260 is a catalytic residue. Asp-319 and Asp-321 together coordinate substrate. Residue Asp-413 is part of the active site. Helical transmembrane passes span 491–511 (LILP…TMFF) and 516–536 (LPSW…IIPA). Ser-608 carries the phosphoserine modification. The next 2 membrane-spanning stretches (helical) occupy residues 632–651 (LYRT…VRSL) and 657–677 (IHFY…LDLI).

Belongs to the glycosyltransferase 2 family. Plant cellulose synthase-like C subfamily. In terms of assembly, homodimer. Mainly expressed in flowers and seeds, and, to a lower extent, in seedlings, roots, leaves and stems.

The protein resides in the golgi apparatus membrane. In terms of biological role, probable beta-1,4-glucan synthase rather involved in the synthesis of the xyloglucan backbone than cellulose. Seems to work simultaneously with xyloglucan 6-xylosyltransferase. Xyloglucan is a noncellulosic polysaccharides of plant cell wall and consists of a glucan backbone substituted by xylose, galactose and fucose. The protein is Probable xyloglucan glycosyltransferase 6 of Arabidopsis thaliana (Mouse-ear cress).